We begin with the raw amino-acid sequence, 75 residues long: Anionic peptide (75 aa).

A signal peptide spans 1-24 (MVSKSLIVLLLVSVLVSTFYTSEA).

It belongs to the non-disulfide-bridged peptide (NDBP) superfamily. As to expression, expressed by the venom gland.

Its subcellular location is the secreted. In Tityus discrepans (Venezuelan scorpion), this protein is Anionic peptide.